Consider the following 114-residue polypeptide: Gonadotropin subunit beta-1 (114 aa).

Residues 1 to 19 form the signal peptide; sequence MQLVLMAAVLALAEVGCFG. 6 cysteine pairs are disulfide-bonded: cysteine 20–cysteine 66, cysteine 32–cysteine 80, cysteine 37–cysteine 114, cysteine 43–cysteine 92, cysteine 47–cysteine 94, and cysteine 97–cysteine 104. A glycan (N-linked (GlcNAc...) asparagine) is linked at asparagine 24.

It belongs to the glycoprotein hormones subunit beta family. As to quaternary structure, heterodimer of an alpha and a beta chain.

The protein localises to the secreted. Functionally, involved in gametogenesis and steroidogenesis. In Fundulus heteroclitus (Killifish), this protein is Gonadotropin subunit beta-1 (cgba).